The primary structure comprises 117 residues: MVAMKYVIAMIRPERLDAVKRELQKIEVSRLTVSSVSGYGAQKGYMEIYRAMEYDANLLEKIKIEIAVNDEFLEPTIEAIKTGAKGSDGYVGSGKIFVLPLENVIRIRTNETGPEAI.

Residues T32, 40-42 (GAQ), and 92-95 (GSGK) contribute to the ADP site. ATP-binding positions include T32, 40–42 (GAQ), and 92–95 (GSGK).

The protein belongs to the P(II) protein family. As to quaternary structure, homotrimer. Interacts and forms stable complexes with the glutamine synthetase GlnA1.

It is found in the cytoplasm. Inhibitory effects on GlnA1 are abolished in the presence of the effector 2-oxoglutarate. Its function is as follows. Involved in the regulation of nitrogen metabolism. Regulates the activity of its targets by protein-protein interaction in response to the nitrogen status of the cell. Allows finetuning control of the glutamine synthetase GlnA1 under changing nitrogen availabilities via direct protein interaction. The polypeptide is Nitrogen regulatory protein GlnK1 (Methanosarcina mazei (strain ATCC BAA-159 / DSM 3647 / Goe1 / Go1 / JCM 11833 / OCM 88) (Methanosarcina frisia)).